Reading from the N-terminus, the 1191-residue chain is DNA topoisomerase 2 (1191 aa).

Residues asparagine 64, asparagine 95, and 142-149 (GTNGVGLK) each bind ATP. Residues glutamate 437, aspartate 538, and aspartate 540 each coordinate Mg(2+). A Topo IIA-type catalytic domain is found at 706–1173 (IPNFLDGMTR…PGASVWLEEI (468 aa)). Tyrosine 799 (O-(5'-phospho-DNA)-tyrosine intermediate) is an active-site residue.

It belongs to the type II topoisomerase family. It depends on Mg(2+) as a cofactor. Mn(2+) serves as cofactor. Requires Ca(2+) as cofactor.

The protein localises to the host cytoplasm. The catalysed reaction is ATP-dependent breakage, passage and rejoining of double-stranded DNA.. Its function is as follows. Type II topoisomerase. Processively relaxes supercoiled DNA. Displays DNA-supercoiling activity only when associated with the viral histone-like protein. This chain is DNA topoisomerase 2, found in Ornithodoros (relapsing fever ticks).